The sequence spans 290 residues: UPF0761 membrane protein YihY (290 aa).

6 helical membrane-spanning segments follow: residues 44-64, 104-124, 140-160, 183-203, 210-230, and 244-264; these read LLSLVPLVAVVFALFAAFPMF, VGACGLIVTALLLMYSIDSAL, FAVYWMILTLGPLLAGASLAI, IFPLLLSWISFWLLYSIVPTI, AIVGAFVAALLFEAGKKGFAL, and VLAVIPILFVWVYWTWCIVLL.

This sequence belongs to the UPF0761 family.

The protein resides in the cell inner membrane. The polypeptide is UPF0761 membrane protein YihY (Escherichia fergusonii (strain ATCC 35469 / DSM 13698 / CCUG 18766 / IAM 14443 / JCM 21226 / LMG 7866 / NBRC 102419 / NCTC 12128 / CDC 0568-73)).